The sequence spans 141 residues: MASEQTLSIIKPDAVQNNYIGEIISRFEQAGLKIAAIKMTTLTKDQASKFYAIHKDRPFYNDLVNFMSSGPVVVMVLEGNQAIAKNRELMGATDPKKAEKGTLRADFAESMSRNAVHGSDSSETAEEEVLFFFKPDEITHR.

ATP contacts are provided by lysine 11, phenylalanine 59, arginine 87, threonine 93, arginine 104, and asparagine 114. The active-site Pros-phosphohistidine intermediate is the histidine 117.

It belongs to the NDK family. In terms of assembly, homotetramer. Mg(2+) serves as cofactor.

It is found in the cytoplasm. It carries out the reaction a 2'-deoxyribonucleoside 5'-diphosphate + ATP = a 2'-deoxyribonucleoside 5'-triphosphate + ADP. The catalysed reaction is a ribonucleoside 5'-diphosphate + ATP = a ribonucleoside 5'-triphosphate + ADP. Its function is as follows. Major role in the synthesis of nucleoside triphosphates other than ATP. The ATP gamma phosphate is transferred to the NDP beta phosphate via a ping-pong mechanism, using a phosphorylated active-site intermediate. The protein is Nucleoside diphosphate kinase 1 of Protochlamydia amoebophila (strain UWE25).